The sequence spans 494 residues: Glycerol kinase (494 aa).

Thr-12 serves as a coordination point for ADP. Residues Thr-12, Thr-13, and Ser-14 each coordinate ATP. Thr-12 contributes to the sn-glycerol 3-phosphate binding site. An ADP-binding site is contributed by Arg-16. Arg-82, Glu-83, Tyr-134, and Asp-244 together coordinate sn-glycerol 3-phosphate. Residues Arg-82, Glu-83, Tyr-134, Asp-244, and Gln-245 each coordinate glycerol. Residues Thr-266 and Gly-309 each contribute to the ADP site. Residues Thr-266, Gly-309, Gln-313, and Gly-410 each contribute to the ATP site. ADP contacts are provided by Gly-410 and Asn-414.

The protein belongs to the FGGY kinase family. As to quaternary structure, homotetramer and homodimer (in equilibrium).

The catalysed reaction is glycerol + ATP = sn-glycerol 3-phosphate + ADP + H(+). Its pathway is polyol metabolism; glycerol degradation via glycerol kinase pathway; sn-glycerol 3-phosphate from glycerol: step 1/1. Its activity is regulated as follows. Activated by phosphorylation and inhibited by fructose 1,6-bisphosphate (FBP). In terms of biological role, key enzyme in the regulation of glycerol uptake and metabolism. Catalyzes the phosphorylation of glycerol to yield sn-glycerol 3-phosphate. This Desulfitobacterium hafniense (strain DSM 10664 / DCB-2) protein is Glycerol kinase.